Consider the following 254-residue polypeptide: Aquaporin TIP1-2 (254 aa).

Helical transmembrane passes span 24 to 44 and 56 to 76; these read VAEFISTLIFVFAGSGSGMAF and AGLIAASLAHALALFVAVSVG. The short motif at 85 to 87 is the NPA 1 element; sequence NPA. 3 helical membrane passes run 103-123, 144-164, and 173-193; these read ALVYWVAQLLGSVVACLLLKI, AVVLEMVMTFGLVYTVYATAV, and VIAPIAIGFIVGANILAGGAF. An NPA 2 motif is present at residues 199 to 201; that stretch reads NPA. The helical transmembrane segment at 220–240 threads the bilayer; it reads WVGPLAGAAIAALVYDIIFIG.

Belongs to the MIP/aquaporin (TC 1.A.8) family. TIP (TC 1.A.8.10) subfamily.

The protein localises to the vacuole membrane. In terms of biological role, aquaporins facilitate the transport of water and small neutral solutes across cell membranes. The protein is Aquaporin TIP1-2 (TIP1-2) of Zea mays (Maize).